The chain runs to 65 residues: Large ribosomal subunit protein bL35 (65 aa).

The tract at residues 24 to 48 (RRKAGKSHLLEHKSSDKKRSMSKTT) is disordered. Residues 31–42 (HLLEHKSSDKKR) are compositionally biased toward basic and acidic residues.

It belongs to the bacterial ribosomal protein bL35 family.

The protein is Large ribosomal subunit protein bL35 of Nostoc punctiforme (strain ATCC 29133 / PCC 73102).